We begin with the raw amino-acid sequence, 272 residues long: NADPH-dependent 7-cyano-7-deazaguanine reductase (272 aa).

82–84 is a substrate binding site; sequence IES. 84–85 provides a ligand contact to NADPH; that stretch reads SK. Residue cysteine 178 is the Thioimide intermediate of the active site. Aspartate 185 (proton donor) is an active-site residue. 217–218 provides a ligand contact to substrate; sequence HE. 246-247 contributes to the NADPH binding site; sequence RG.

Belongs to the GTP cyclohydrolase I family. QueF type 2 subfamily. In terms of assembly, homodimer.

Its subcellular location is the cytoplasm. It catalyses the reaction 7-aminomethyl-7-carbaguanine + 2 NADP(+) = 7-cyano-7-deazaguanine + 2 NADPH + 3 H(+). The protein operates within tRNA modification; tRNA-queuosine biosynthesis. Catalyzes the NADPH-dependent reduction of 7-cyano-7-deazaguanine (preQ0) to 7-aminomethyl-7-deazaguanine (preQ1). The chain is NADPH-dependent 7-cyano-7-deazaguanine reductase from Stenotrophomonas maltophilia (strain K279a).